The primary structure comprises 522 residues: F-box only protein 7 (522 aa).

Residues 1–88 (MRLRVRLLKR…QDDIPAPNIP (88 aa)) are ubiquitin-like. A disordered region spans residues 85–144 (PNIPSSTDSEHSSLQNNEQPSLATSSNQTSMQDEQPSDSFQGQAAQSGVWNDDSMLGPSQ). Positions 87–133 (IPSSTDSEHSSLQNNEQPSLATSSNQTSMQDEQPSDSFQGQAAQSGV) are enriched in polar residues. Residues 92–129 (DSEHSSLQNNEQPSLATSSNQTSMQDEQPSDSFQGQAA) form an important for interaction with PINK1 region. Residues 129–169 (AQSGVWNDDSMLGPSQNFEAESIQDNAHMAEGTGFYPSEPM) form an important for interaction with CDK6 region. An important for dimerization and interaction with PSMF1 region spans residues 180-324 (PHSLETLYQS…PLLAFTRQAL (145 aa)). An F-box domain is found at 329–375 (VFGLVVLPLELKLRIFRLLDVRSVLSLSAVCRDLFTASNDPLLWRFL). Residues 381-522 (RDNTVRVQDT…RPTDGRLSFM (142 aa)) are important for interaction with CDK6. 2 positions are modified to omega-N-methylarginine: Arg432 and Arg451. The RFDP motif motif lies at 481-484 (RFDP). Positions 483 to 522 (DPVGPLPGPNPILPGRGGPNDRFPFRPSRGRPTDGRLSFM) are disordered. Residue Arg518 is modified to Asymmetric dimethylarginine.

As to quaternary structure, part of the SCF (SKP1-CUL1-F-box) E3 ubiquitin-protein ligase complex SCF(FBXO7) formed of CUL1, SKP1, RBX1 and FBXO7. Interacts via its C-terminal proline-rich region with DLGAP5. Interacts with BIRC2. Interacts with CDK6 and promotes its interaction with D-type cyclin. Interacts with PSMF1. Interacts (via the N-terminal Ubl domain) with PRKN. Interact (via N-terminal region) with PINK1. In terms of assembly, interact (via N-terminal region) with PINK1.

Its subcellular location is the cytoplasm. The protein localises to the nucleus. It is found in the mitochondrion. It localises to the cytosol. Its pathway is protein modification; protein ubiquitination. In terms of biological role, substrate recognition component of a SCF (SKP1-CUL1-F-box protein) E3 ubiquitin-protein ligase complex which mediates the ubiquitination and subsequent proteasomal degradation of target proteins and plays a role in several biological processes such as cell cycle, cell proliferation, or maintenance of chromosome stability. Recognizes and ubiquitinates BIRC2 and the cell cycle regulator DLGAP5. Plays a role downstream of PINK1 in the clearance of damaged mitochondria via selective autophagy (mitophagy) by targeting PRKN to dysfunctional depolarized mitochondria. Promotes MFN1 ubiquitination. Mediates the ubiquitination and proteasomal degradation of UXT isoform 2, thereby impairing the NF-kappa-B signaling pathway. Inhibits NF-kappa-B pathway also by promoting the ubiquitination of TRAF2. Affects the assembly state and activity of the proteasome in the cells including neurons by ubiquitinating the proteasomal subunit PSMA2 via 'Lys-63'-linked polyubiquitin chains. Promotes 'Lys-48'-linked polyubiquitination SIRT7, leading to the hydrogen peroxide-induced cell death. The chain is F-box only protein 7 (FBXO7) from Homo sapiens (Human).